We begin with the raw amino-acid sequence, 640 residues long: RAP domain-containing protein, chloroplastic (640 aa).

Residues 1-32 constitute a chloroplast transit peptide; sequence MEAALLRPPPLAARGGVSIAIAFSVSRLPSAA. The disordered stretch occupies residues 111-158; the sequence is SLQRMVASPKKKNKKKKSKKTNLKQKKAAEPKPPRDTDDDEDDEEEAD. Residues 119-136 show a composition bias toward basic residues; the sequence is PKKKNKKKKSKKTNLKQK. The span at 137–146 shows a compositional bias: basic and acidic residues; it reads KAAEPKPPRD. A compositionally biased stretch (acidic residues) spans 147-158; sequence TDDDEDDEEEAD. Residues 575–633 enclose the RAP domain; sequence LAFEIDGPSHFSRNLGTPLGHTAFKRRYIAAAGWNLVSLSHQEWENLEGEFEQLEYLRR.

Expressed in roots, leaf sheaths, veins of leaf blade, mature leaves, endodermis of culm, panicles and anthers.

Its subcellular location is the plastid. The protein resides in the chloroplast. In terms of biological role, probable RNA-binding protein that plays an essential role in chloroplast development. Regulates the ribosomal proteins homeostasis and ribosomal RNA development in chloroplasts. Involved the regulation of 16S rRNA and required for the expression of chloroplast-associated photosynthetic genes. In Oryza sativa subsp. japonica (Rice), this protein is RAP domain-containing protein, chloroplastic.